Here is an 828-residue protein sequence, read N- to C-terminus: Periplasmic nitrate reductase (828 aa).

The segment at residues 1–31 (MKLSRRSFMKANAVAAAAAAAGLSVPGVARA) is a signal peptide (tat-type signal). The 57-residue stretch at 39–95 (IKWDKAPCRFCGTGCGVLVGTQQGRVVACQGDPDAPVNRGLNCIKGYFLPKIMYGKD) folds into the 4Fe-4S Mo/W bis-MGD-type domain. Cys-46, Cys-49, Cys-53, and Cys-81 together coordinate [4Fe-4S] cluster. Mo-bis(molybdopterin guanine dinucleotide) contacts are provided by residues Lys-83, Gln-150, Asn-175, Cys-179, 212-219 (WGANMAEM), 243-247 (STYQH), 262-264 (QSD), Met-372, Gln-376, Asn-482, 508-509 (SD), Lys-531, Asp-558, and 718-727 (TGRVLEHWHT). Position 794 (Phe-794) interacts with substrate. Positions 802 and 819 each coordinate Mo-bis(molybdopterin guanine dinucleotide).

It belongs to the prokaryotic molybdopterin-containing oxidoreductase family. NasA/NapA/NarB subfamily. Component of the periplasmic nitrate reductase NapAB complex composed of NapA and NapB. [4Fe-4S] cluster serves as cofactor. Mo-bis(molybdopterin guanine dinucleotide) is required as a cofactor. In terms of processing, predicted to be exported by the Tat system. The position of the signal peptide cleavage has not been experimentally proven.

It is found in the periplasm. The catalysed reaction is 2 Fe(II)-[cytochrome] + nitrate + 2 H(+) = 2 Fe(III)-[cytochrome] + nitrite + H2O. Functionally, catalytic subunit of the periplasmic nitrate reductase complex NapAB. Receives electrons from NapB and catalyzes the reduction of nitrate to nitrite. This chain is Periplasmic nitrate reductase, found in Escherichia coli O7:K1 (strain IAI39 / ExPEC).